The primary structure comprises 542 residues: GMP synthase [glutamine-hydrolyzing] (542 aa).

One can recognise a Glutamine amidotransferase type-1 domain in the interval 28-218 (IIVILDFGSQ…VYHICHCEPT (191 aa)). The Nucleophile role is filled by Cys-105. Active-site residues include His-192 and Glu-194. One can recognise a GMPS ATP-PPase domain in the interval 219 to 417 (WTTAAFIEES…IGLPEEIVRR (199 aa)). Residue 246-252 (SGGVDSS) coordinates ATP.

As to quaternary structure, homodimer.

The enzyme catalyses XMP + L-glutamine + ATP + H2O = GMP + L-glutamate + AMP + diphosphate + 2 H(+). Its pathway is purine metabolism; GMP biosynthesis; GMP from XMP (L-Gln route): step 1/1. Functionally, catalyzes the synthesis of GMP from XMP. The chain is GMP synthase [glutamine-hydrolyzing] (guaA) from Synechocystis sp. (strain ATCC 27184 / PCC 6803 / Kazusa).